Here is a 78-residue protein sequence, read N- to C-terminus: Large ribosomal subunit protein uL29 (78 aa).

Belongs to the universal ribosomal protein uL29 family.

This chain is Large ribosomal subunit protein uL29, found in Rhodococcus erythropolis (strain PR4 / NBRC 100887).